The primary structure comprises 188 residues: GTPase KRas (188 aa).

GTP is bound by residues glycine 10 to alanine 18, valine 29 to threonine 35, alanine 59 to glycine 60, and asparagine 116 to aspartate 119. An Effector region motif is present at residues tyrosine 32–tyrosine 40. The tract at residues glutamate 168–methionine 188 is disordered. Cysteine methyl ester is present on cysteine 185. Cysteine 185 is lipidated: S-farnesyl cysteine. Positions isoleucine 186–methionine 188 are cleaved as a propeptide — removed in mature form.

It belongs to the small GTPase superfamily. Ras family.

It is found in the cell membrane. The protein resides in the cytoplasm. It catalyses the reaction GTP + H2O = GDP + phosphate + H(+). Alternates between an inactive form bound to GDP and an active form bound to GTP. Activated by a guanine nucleotide-exchange factor (GEF) and inactivated by a GTPase-activating protein (GAP). In terms of biological role, ras proteins bind GDP/GTP and possess intrinsic GTPase activity. Plays an important role in the regulation of cell proliferation. May play a role in promoting oncogenic events by inducing transcriptional silencing of tumor suppressor genes (TSGs). This Meleagris gallopavo (Wild turkey) protein is GTPase KRas (KRAS).